A 256-amino-acid polypeptide reads, in one-letter code: Imidazole glycerol phosphate synthase subunit HisF (256 aa).

Active-site residues include Asp-12 and Asp-131.

Belongs to the HisA/HisF family. In terms of assembly, heterodimer of HisH and HisF.

The protein localises to the cytoplasm. It catalyses the reaction 5-[(5-phospho-1-deoxy-D-ribulos-1-ylimino)methylamino]-1-(5-phospho-beta-D-ribosyl)imidazole-4-carboxamide + L-glutamine = D-erythro-1-(imidazol-4-yl)glycerol 3-phosphate + 5-amino-1-(5-phospho-beta-D-ribosyl)imidazole-4-carboxamide + L-glutamate + H(+). It participates in amino-acid biosynthesis; L-histidine biosynthesis; L-histidine from 5-phospho-alpha-D-ribose 1-diphosphate: step 5/9. In terms of biological role, IGPS catalyzes the conversion of PRFAR and glutamine to IGP, AICAR and glutamate. The HisF subunit catalyzes the cyclization activity that produces IGP and AICAR from PRFAR using the ammonia provided by the HisH subunit. This Pseudomonas syringae pv. syringae (strain B728a) protein is Imidazole glycerol phosphate synthase subunit HisF.